We begin with the raw amino-acid sequence, 160 residues long: Small RNA binding protein 1 (160 aa).

Residues 8-86 (FRCFVGGLAW…RNITVNEAQQ (79 aa)) form the RRM domain. A disordered region spans residues 82 to 160 (NEAQQRGGGG…GGGSEGGWRN (79 aa)). A compositionally biased stretch (gly residues) spans 87–160 (RGGGGGGGYN…GGGSEGGWRN (74 aa)). The glycine-rich (GR) required for cell-to-cell movement stretch occupies residues 88–157 (GGGGGGGYNR…GSGGGGSEGG (70 aa)).

Belongs to the GR-RBP family. Binds to small phloem-mobile single-stranded RNAs (ss-sRNA, e.g. small interfering RNA (siRNA) and microRNA (miRNA)) in the phloeme exudate, including viral-derived sRNA (vsiRNA). Accumulates in phloem exudates.

The protein localises to the secreted. Possibly has a role in RNA transcription or processing during stress. Binds sequence non-specifically to RNAs and DNAs. Mediates cell-to-cell trafficking of RNA interference (RNAi) signals (small RNAs (sRNA), e.g. small interfering RNA (siRNA) and microRNA (miRNA)) which regulate growth and development, as well as responses to environmental inputs, including pathogen attack; can compromise zucchini yellow mosaic virus (ZYMV) and tobacco rattle virus (TRV) infections at the early stage. The sequence is that of Small RNA binding protein 1 from Cucumis sativus (Cucumber).